A 190-amino-acid polypeptide reads, in one-letter code: dTTP/UTP pyrophosphatase (190 aa).

Asp-71 (proton acceptor) is an active-site residue.

This sequence belongs to the Maf family. YhdE subfamily. The cofactor is a divalent metal cation.

It localises to the cytoplasm. The enzyme catalyses dTTP + H2O = dTMP + diphosphate + H(+). It carries out the reaction UTP + H2O = UMP + diphosphate + H(+). Functionally, nucleoside triphosphate pyrophosphatase that hydrolyzes dTTP and UTP. May have a dual role in cell division arrest and in preventing the incorporation of modified nucleotides into cellular nucleic acids. The protein is dTTP/UTP pyrophosphatase of Xanthomonas euvesicatoria pv. vesicatoria (strain 85-10) (Xanthomonas campestris pv. vesicatoria).